We begin with the raw amino-acid sequence, 357 residues long: Anthranilate phosphoribosyltransferase (357 aa).

5-phospho-alpha-D-ribose 1-diphosphate is bound by residues glycine 91, 94–95 (GD), threonine 99, 101–104 (NIST), 119–127 (KHGNRSVSS), and serine 131. Glycine 91 lines the anthranilate pocket. Serine 103 serves as a coordination point for Mg(2+). Asparagine 122 serves as a coordination point for anthranilate. Position 177 (arginine 177) interacts with anthranilate. Positions 235 and 236 each coordinate Mg(2+).

This sequence belongs to the anthranilate phosphoribosyltransferase family. Homodimer. Requires Mg(2+) as cofactor.

The catalysed reaction is N-(5-phospho-beta-D-ribosyl)anthranilate + diphosphate = 5-phospho-alpha-D-ribose 1-diphosphate + anthranilate. It functions in the pathway amino-acid biosynthesis; L-tryptophan biosynthesis; L-tryptophan from chorismate: step 2/5. Functionally, catalyzes the transfer of the phosphoribosyl group of 5-phosphorylribose-1-pyrophosphate (PRPP) to anthranilate to yield N-(5'-phosphoribosyl)-anthranilate (PRA). The polypeptide is Anthranilate phosphoribosyltransferase (Shewanella baltica (strain OS155 / ATCC BAA-1091)).